Here is a 73-residue protein sequence, read N- to C-terminus: Large ribosomal subunit protein uL24 (73 aa).

The segment covering 53-65 (NPKGGFIKKEKPM) has biased composition (basic and acidic residues). Positions 53–73 (NPKGGFIKKEKPMHISNVKKA) are disordered.

The protein belongs to the universal ribosomal protein uL24 family. In terms of assembly, part of the 50S ribosomal subunit.

One of two assembly initiator proteins, it binds directly to the 5'-end of the 23S rRNA, where it nucleates assembly of the 50S subunit. Functionally, one of the proteins that surrounds the polypeptide exit tunnel on the outside of the subunit. The chain is Large ribosomal subunit protein uL24 from Helicobacter pylori (strain J99 / ATCC 700824) (Campylobacter pylori J99).